Here is a 528-residue protein sequence, read N- to C-terminus: Probable feruloyl esterase B-1 (528 aa).

The N-terminal stretch at 1–19 is a signal peptide; the sequence is MMWWFLLIGLASAAATASS. Disulfide bonds link cysteine 29/cysteine 78, cysteine 64/cysteine 117, cysteine 190/cysteine 445, cysteine 259/cysteine 276, cysteine 285/cysteine 295, and cysteine 505/cysteine 527. Asparagine 83 and asparagine 101 each carry an N-linked (GlcNAc...) asparagine glycan. The active-site Acyl-ester intermediate is serine 191. Ca(2+) is bound by residues aspartate 260, aspartate 263, alanine 265, aspartate 267, and isoleucine 269. N-linked (GlcNAc...) asparagine glycosylation is found at asparagine 286, asparagine 354, and asparagine 385. Catalysis depends on charge relay system residues aspartate 404 and histidine 444.

This sequence belongs to the tannase family.

Its subcellular location is the secreted. The catalysed reaction is feruloyl-polysaccharide + H2O = ferulate + polysaccharide.. Its function is as follows. Involved in degradation of plant cell walls. Hydrolyzes the feruloyl-arabinose ester bond in arabinoxylans as well as the feruloyl-galactose and feruloyl-arabinose ester bonds in pectin. The polypeptide is Probable feruloyl esterase B-1 (faeB-1) (Aspergillus fumigatus (strain CBS 144.89 / FGSC A1163 / CEA10) (Neosartorya fumigata)).